Consider the following 327-residue polypeptide: Ribose-phosphate pyrophosphokinase (327 aa).

ATP contacts are provided by residues 40–42 (DGE) and 99–100 (RQ). Positions 134 and 173 each coordinate Mg(2+). Lysine 196 is an active-site residue. Residues arginine 198, aspartate 222, and 226-230 (DTANT) contribute to the D-ribose 5-phosphate site.

The protein belongs to the ribose-phosphate pyrophosphokinase family. Class I subfamily. In terms of assembly, homohexamer. The cofactor is Mg(2+).

It localises to the cytoplasm. It catalyses the reaction D-ribose 5-phosphate + ATP = 5-phospho-alpha-D-ribose 1-diphosphate + AMP + H(+). Its pathway is metabolic intermediate biosynthesis; 5-phospho-alpha-D-ribose 1-diphosphate biosynthesis; 5-phospho-alpha-D-ribose 1-diphosphate from D-ribose 5-phosphate (route I): step 1/1. Involved in the biosynthesis of the central metabolite phospho-alpha-D-ribosyl-1-pyrophosphate (PRPP) via the transfer of pyrophosphoryl group from ATP to 1-hydroxyl of ribose-5-phosphate (Rib-5-P). This chain is Ribose-phosphate pyrophosphokinase, found in Chromobacterium violaceum (strain ATCC 12472 / DSM 30191 / JCM 1249 / CCUG 213 / NBRC 12614 / NCIMB 9131 / NCTC 9757 / MK).